The sequence spans 362 residues: Putative glutamate--cysteine ligase 2-1 (362 aa).

It belongs to the glutamate--cysteine ligase type 2 family. YbdK subfamily.

The enzyme catalyses L-cysteine + L-glutamate + ATP = gamma-L-glutamyl-L-cysteine + ADP + phosphate + H(+). In terms of biological role, ATP-dependent carboxylate-amine ligase which exhibits weak glutamate--cysteine ligase activity. The sequence is that of Putative glutamate--cysteine ligase 2-1 from Streptomyces avermitilis (strain ATCC 31267 / DSM 46492 / JCM 5070 / NBRC 14893 / NCIMB 12804 / NRRL 8165 / MA-4680).